A 514-amino-acid polypeptide reads, in one-letter code: Cardiolipin synthase 2 (514 aa).

3 helical membrane passes run 7-27, 41-61, and 71-91; these read LIFFVLLLFALFVSLRMFIDV, ILGIISILFTVSAFLIGCVIF, and LTWLIVLGIFPVFGFFAYLLF. PLD phosphodiesterase domains lie at 249-276 and 427-454; these read INYRNHRKIVIIDGNEGFVGGLNIGDEY and EKGFLHSKVVIVDSDLASIGTANMDMRS. Catalysis depends on residues histidine 254, lysine 256, aspartate 261, histidine 432, lysine 434, and aspartate 439.

This sequence belongs to the phospholipase D family. Cardiolipin synthase subfamily.

The protein localises to the cell membrane. The catalysed reaction is 2 a 1,2-diacyl-sn-glycero-3-phospho-(1'-sn-glycerol) = a cardiolipin + glycerol. Catalyzes the reversible phosphatidyl group transfer from one phosphatidylglycerol molecule to another to form cardiolipin (CL) (diphosphatidylglycerol) and glycerol. This chain is Cardiolipin synthase 2 (cls2), found in Bacillus anthracis.